Reading from the N-terminus, the 210-residue chain is MHKHSATADMLPISAFSPLKFLGGVVATPQGPVLWDATTTPVPFQAFPCPPAITPINQFVNYQPAPAMDKIWRPAFEDYRGVTMRPALPEVPETSLRPALQELPEPSSPQSQSSVDDDTDSKEDVTETLECAQALTDLKWGTVDPPRSTSPVTASTSSGVSSDLQKAKEQAIRRYRLIEAKDLGKLVVRGPKKDKRDPDFYIKKVPLHFS.

Positions 101–114 (QELPEPSSPQSQSS) are enriched in low complexity. Residues 101 to 166 (QELPEPSSPQ…SSGVSSDLQK (66 aa)) form a disordered region. The span at 147-164 (RSTSPVTASTSSGVSSDL) shows a compositional bias: polar residues.

This is an uncharacterized protein from Alcelaphine herpesvirus 1 (strain C500) (AlHV-1).